Reading from the N-terminus, the 278-residue chain is Undecaprenyl-diphosphatase 1 (278 aa).

6 helical membrane passes run 45–65 (AVIG…LVYF), 95–115 (WWVI…KPLI), 119–139 (LASL…MWWA), 191–211 (VAAT…AGLY), 225–245 (PLAV…AWLL), and 256–276 (FVVY…TGVL).

Belongs to the UppP family.

It localises to the cell membrane. It carries out the reaction di-trans,octa-cis-undecaprenyl diphosphate + H2O = di-trans,octa-cis-undecaprenyl phosphate + phosphate + H(+). In terms of biological role, catalyzes the dephosphorylation of undecaprenyl diphosphate (UPP). Confers resistance to bacitracin. The polypeptide is Undecaprenyl-diphosphatase 1 (Streptomyces coelicolor (strain ATCC BAA-471 / A3(2) / M145)).